The chain runs to 325 residues: tRNA dimethylallyltransferase (325 aa).

17-24 (GPTASGKT) lines the ATP pocket. 19-24 (TASGKT) is a substrate binding site. Interaction with substrate tRNA stretches follow at residues 42–45 (DSAL), 166–170 (QRIQR), 251–256 (RCVGYR), and 284–291 (KRQITWLR).

Belongs to the IPP transferase family. Monomer. It depends on Mg(2+) as a cofactor.

The enzyme catalyses adenosine(37) in tRNA + dimethylallyl diphosphate = N(6)-dimethylallyladenosine(37) in tRNA + diphosphate. Catalyzes the transfer of a dimethylallyl group onto the adenine at position 37 in tRNAs that read codons beginning with uridine, leading to the formation of N6-(dimethylallyl)adenosine (i(6)A). The chain is tRNA dimethylallyltransferase from Burkholderia multivorans (strain ATCC 17616 / 249).